A 203-amino-acid polypeptide reads, in one-letter code: Small ribosomal subunit protein uS4 (203 aa).

Residues 22 to 45 form a disordered region; the sequence is TGKELARRPYKPGQHGPNSRGKVS. The region spanning 93–156 is the S4 RNA-binding domain; that stretch reads QRLDNVVYRL…QNISTIKEAV (64 aa).

Belongs to the universal ribosomal protein uS4 family. In terms of assembly, part of the 30S ribosomal subunit. Contacts protein S5. The interaction surface between S4 and S5 is involved in control of translational fidelity.

One of the primary rRNA binding proteins, it binds directly to 16S rRNA where it nucleates assembly of the body of the 30S subunit. Functionally, with S5 and S12 plays an important role in translational accuracy. This is Small ribosomal subunit protein uS4 from Enterococcus faecalis (strain ATCC 700802 / V583).